Here is a 226-residue protein sequence, read N- to C-terminus: UPF0758 protein PputW619_0186 (226 aa).

Residues 102–224 form the MPN domain; sequence ALESPSAVRR…PLSMVEQGWI (123 aa). Residues His173, His175, and Asp186 each contribute to the Zn(2+) site. Positions 173–186 match the JAMM motif motif; it reads HNHPSGNSEPSQDD.

The protein belongs to the UPF0758 family.

The polypeptide is UPF0758 protein PputW619_0186 (Pseudomonas putida (strain W619)).